The sequence spans 281 residues: Bifunctional protein FolD (281 aa).

Residues 164 to 166 (GRS), S189, and I230 contribute to the NADP(+) site.

It belongs to the tetrahydrofolate dehydrogenase/cyclohydrolase family. In terms of assembly, homodimer.

It carries out the reaction (6R)-5,10-methylene-5,6,7,8-tetrahydrofolate + NADP(+) = (6R)-5,10-methenyltetrahydrofolate + NADPH. The enzyme catalyses (6R)-5,10-methenyltetrahydrofolate + H2O = (6R)-10-formyltetrahydrofolate + H(+). The protein operates within one-carbon metabolism; tetrahydrofolate interconversion. Functionally, catalyzes the oxidation of 5,10-methylenetetrahydrofolate to 5,10-methenyltetrahydrofolate and then the hydrolysis of 5,10-methenyltetrahydrofolate to 10-formyltetrahydrofolate. The sequence is that of Bifunctional protein FolD from Pelagibacter ubique (strain HTCC1062).